We begin with the raw amino-acid sequence, 270 residues long: MTTTHPSGFAPAASPLAPTMIHTPDGAISAGITSIPSQGDDMPAYYARPKASDGALPVVIVVQEIFGVHEHIRDICRRLALEGYLAIAPELYFREGDPNDFADIPTLLSGLVAKVPDSQVLADLDHVASWASRNGGDAHRLMITGFCWGGRITWLYAAHNPQLKAAVAWYGKLVGDTSLNSPKHPVDIATDLNAPVLGLYSGQDTSIPQESVETMRQALRAANAKAEIVVYPDAGHAFNADYRPGYHEASAKDGWQRMLEWFAQYGGKKG.

Active-site residues include C147, D204, and H236.

This sequence belongs to the dienelactone hydrolase family.

The catalysed reaction is 2-(5-oxo-2,5-dihydrofuran-2-ylidene)acetate + H2O = 4-oxohex-2-enedioate + H(+). The protein is Putative carboxymethylenebutenolidase (ysgA) of Salmonella typhi.